The sequence spans 493 residues: Cyclin-dependent kinase-like 2 (493 aa).

The Protein kinase domain occupies 4–287 (YENLGLVGEG…CAELLHHDFF (284 aa)). ATP-binding positions include 10–18 (VGEGSYGMV) and K33. The [NKR]KIAxRE motif lies at 45 to 51 (KKIAMRE). Residue D126 is the Proton acceptor of the active site. A disordered region spans residues 363–384 (GEKAEKGNRASNASCLHDSRTS).

Belongs to the protein kinase superfamily. CMGC Ser/Thr protein kinase family. CDC2/CDKX subfamily. As to expression, expressed in testis and kidney, and at lower level in brain and lung.

It localises to the cytoplasm. The protein localises to the nucleus. It catalyses the reaction L-seryl-[protein] + ATP = O-phospho-L-seryl-[protein] + ADP + H(+). It carries out the reaction L-threonyl-[protein] + ATP = O-phospho-L-threonyl-[protein] + ADP + H(+). The chain is Cyclin-dependent kinase-like 2 from Homo sapiens (Human).